Here is a 292-residue protein sequence, read N- to C-terminus: RNA 5'-monophosphate methyltransferase (292 aa).

Positions 1–21 (MAVPTELDGGSVKETAAEEES) are disordered. S-adenosyl-L-methionine is bound by residues R46, N76, D110, 135–136 (DF), and M164. A Bin3-type SAM domain is found at 53-274 (ELLRQLFPES…KQTIETHPIP (222 aa)).

This sequence belongs to the methyltransferase superfamily. Interacts with DICER1; the interaction may be mediated by RNA.

It localises to the cytoplasm. The catalysed reaction is a 5'-end 5'-phospho-ribonucleoside-RNA + S-adenosyl-L-methionine = a 5'-end (5'-methylphospho)-ribonucleoside-RNA + S-adenosyl-L-homocysteine. The enzyme catalyses a 5'-end 5'-phospho-ribonucleoside-RNA + 2 S-adenosyl-L-methionine = a 5'-end (5'-bismethylphospho)-ribonucleoside-RNA + 2 S-adenosyl-L-homocysteine. Functionally, O-methyltransferase that specifically monomethylates 5'-monophosphate of cytoplasmic histidyl tRNA (tRNA(His)), acting as a capping enzyme by protecting tRNA(His) from cleavage by DICER1. Also able, with less efficiently, to methylate the 5' monophosphate of a subset of pre-miRNAs, acting as a negative regulator of miRNA processing. The 5' monophosphate of pre-miRNAs is recognized by DICER1 and is required for pre-miRNAs processing: methylation at this position reduces the processing of pre-miRNAs by DICER1. Was also reported to mediate dimethylation of pre-miR-145; however dimethylation cannot be reproduced by another group which observes a monomethylation of pre-miR-145. In Homo sapiens (Human), this protein is RNA 5'-monophosphate methyltransferase.